Reading from the N-terminus, the 553-residue chain is Flotillin family inner membrane protein YqiK (553 aa).

Over 1 to 9 (MDDIVNSVP) the chain is Periplasmic. The helical transmembrane segment at 10-30 (SWMFTAIIAVCILFIIGIIFA) threads the bilayer. Residues 31–553 (RLYRRASAEQ…STTPVEEKAE (523 aa)) are Cytoplasmic-facing.

Belongs to the band 7/mec-2 family. Flotillin subfamily. In terms of assembly, homooligomerizes.

Its subcellular location is the cell inner membrane. The protein resides in the membrane raft. Found in membrane microdomains that may be equivalent to eukaryotic membrane rafts. FMMs are highly dynamic and increase in number as cells age. Flotillins are thought to be important factors in membrane fluidity. This chain is Flotillin family inner membrane protein YqiK (yqiK), found in Escherichia coli (strain K12).